A 264-amino-acid polypeptide reads, in one-letter code: MKSKLKLHGFNNLTKTLSFNIYDICYAETPEDLQAYVQYIDEEYDAERLTQILTDVVDIIGANILNIARQDYDPQGASVTILISEQPVTPTDSQIEESPGPLPDTILAHLDKSHITVHTYPEIHPVDGIATFRVDIDVSTCGVISPLKALNYLIHQFDSDIVTVDYRVRGFTRDIEGRKHFIDHEINSIQNYLSDDTREAYQMTDVNVYQENLFHTKMLLKDFELENYLFGDATRTLSAEQREQVTERLKHEMLEIFYARNMPR.

Catalysis depends on Ser113, which acts as the Schiff-base intermediate with substrate; via pyruvic acid. Residue Ser113 is modified to Pyruvic acid (Ser); by autocatalysis. Residue His118 is the Proton acceptor; for processing activity of the active site. Catalysis depends on Cys141, which acts as the Proton donor; for catalytic activity.

Belongs to the prokaryotic AdoMetDC family. Type 2 subfamily. Heterooctamer of four alpha and four beta chains arranged as a tetramer of alpha/beta heterodimers. Pyruvate is required as a cofactor. Is synthesized initially as an inactive proenzyme. Formation of the active enzyme involves a self-maturation process in which the active site pyruvoyl group is generated from an internal serine residue via an autocatalytic post-translational modification. Two non-identical subunits are generated from the proenzyme in this reaction, and the pyruvate is formed at the N-terminus of the alpha chain, which is derived from the carboxyl end of the proenzyme. The post-translation cleavage follows an unusual pathway, termed non-hydrolytic serinolysis, in which the side chain hydroxyl group of the serine supplies its oxygen atom to form the C-terminus of the beta chain, while the remainder of the serine residue undergoes an oxidative deamination to produce ammonia and the pyruvoyl group blocking the N-terminus of the alpha chain.

It carries out the reaction S-adenosyl-L-methionine + H(+) = S-adenosyl 3-(methylsulfanyl)propylamine + CO2. Its pathway is amine and polyamine biosynthesis; S-adenosylmethioninamine biosynthesis; S-adenosylmethioninamine from S-adenosyl-L-methionine: step 1/1. In terms of biological role, catalyzes the decarboxylation of S-adenosylmethionine to S-adenosylmethioninamine (dcAdoMet), the propylamine donor required for the synthesis of the polyamines spermine and spermidine from the diamine putrescine. The sequence is that of S-adenosylmethionine decarboxylase proenzyme from Pseudomonas aeruginosa (strain ATCC 15692 / DSM 22644 / CIP 104116 / JCM 14847 / LMG 12228 / 1C / PRS 101 / PAO1).